Here is a 125-residue protein sequence, read N- to C-terminus: Probable mercury resistance operon repressor (125 aa).

An HTH arsR-type domain is found at V15–A109. Positions S49–S68 form a DNA-binding region, H-T-H motif. Hg(2+) is bound by residues C69, C73, and C114.

Its function is as follows. Negatively regulates the mercuric reductase merA and the organolyase merB in the absence of mercuric ions. This Streptomyces lividans protein is Probable mercury resistance operon repressor (merR).